Consider the following 396-residue polypeptide: Phosphoglycerate kinase (396 aa).

Residues 21 to 23, Arg36, 59 to 62, Arg118, and Arg151 contribute to the substrate site; these read DFN and HLGR. Residues Lys201, Gly292, Glu323, and 349–352 each bind ATP; that span reads GGDS.

It belongs to the phosphoglycerate kinase family. In terms of assembly, monomer.

The protein localises to the cytoplasm. It carries out the reaction (2R)-3-phosphoglycerate + ATP = (2R)-3-phospho-glyceroyl phosphate + ADP. The protein operates within carbohydrate degradation; glycolysis; pyruvate from D-glyceraldehyde 3-phosphate: step 2/5. The chain is Phosphoglycerate kinase from Leptospira interrogans serogroup Icterohaemorrhagiae serovar Lai (strain 56601).